Here is a 206-residue protein sequence, read N- to C-terminus: Small ribosomal subunit protein uS4c (206 aa).

Composition is skewed to basic residues over residues 1–13 (MSRY…RITR) and 25–34 (QSKKKGRPGQ). The interval 1-50 (MSRYRGPKLRITRRLGALPGLTQKQSKKKGRPGQHGKSNEADNSKKTTEY) is disordered. The segment covering 37 to 50 (KSNEADNSKKTTEY) has biased composition (basic and acidic residues). Positions 95 to 157 (MRLDTICFTL…ATSKNLVEGN (63 aa)) constitute an S4 RNA-binding domain.

This sequence belongs to the universal ribosomal protein uS4 family. In terms of assembly, part of the 30S ribosomal subunit. Contacts protein S5. The interaction surface between S4 and S5 is involved in control of translational fidelity.

Its subcellular location is the plastid. The protein localises to the chloroplast. Its function is as follows. One of the primary rRNA binding proteins, it binds directly to 16S rRNA where it nucleates assembly of the body of the 30S subunit. Functionally, with S5 and S12 plays an important role in translational accuracy. This is Small ribosomal subunit protein uS4c (rps4) from Trieres chinensis (Marine centric diatom).